We begin with the raw amino-acid sequence, 491 residues long: Maintenance of mitochondrial morphology protein 1 (491 aa).

At 1 to 22 (MTFQQNEPSAVPAQSSLSFTQG) the chain is on the lumenal side. A helical membrane pass occupies residues 23-43 (FLLGQLSVVLLIGAFIKFFIF). The Cytoplasmic portion of the chain corresponds to 44-491 (GEAPPPPSRG…GTLPGGAAAN (448 aa)). Disordered stretches follow at residues 50 to 95 (PSRG…PVPS), 275 to 325 (PPLH…SPKS), and 392 to 491 (RTGV…AAAN). A compositionally biased stretch (basic residues) spans 54–64 (LSHRASTHRRS). Composition is skewed to polar residues over residues 65–78 (NSIYTINPNEGTSR) and 85–95 (STSNVLRPVPS). In terms of domain architecture, SMP-LTD spans 131-384 (QPESLDWFNV…EPRVQVVGLP (254 aa)). The segment covering 275 to 287 (PPLHTPSPSPSPP) has biased composition (pro residues). Polar residues-rich tracts occupy residues 300–315 (TNGSREPTQEAPNAQE) and 403–412 (TGSNAASRSA). A compositionally biased stretch (basic and acidic residues) spans 422-434 (RADDIGREPDGLR).

This sequence belongs to the MMM1 family. In terms of assembly, homodimer. Component of the ER-mitochondria encounter structure (ERMES) or MDM complex, composed of mmm1, mdm10, mdm12 and mdm34. A mmm1 homodimer associates with one molecule of mdm12 on each side in a pairwise head-to-tail manner, and the SMP-LTD domains of mmm1 and mdm12 generate a continuous hydrophobic tunnel for phospholipid trafficking.

It is found in the endoplasmic reticulum membrane. Component of the ERMES/MDM complex, which serves as a molecular tether to connect the endoplasmic reticulum (ER) and mitochondria. Components of this complex are involved in the control of mitochondrial shape and protein biogenesis, and function in nonvesicular lipid trafficking between the ER and mitochondria. The mdm12-mmm1 subcomplex functions in the major beta-barrel assembly pathway that is responsible for biogenesis of all outer membrane beta-barrel proteins, and acts in a late step after the SAM complex. The mdm10-mdm12-mmm1 subcomplex further acts in the TOM40-specific pathway after the action of the mdm12-mmm1 complex. Essential for establishing and maintaining the structure of mitochondria and maintenance of mtDNA nucleoids. This is Maintenance of mitochondrial morphology protein 1 from Aspergillus flavus (strain ATCC 200026 / FGSC A1120 / IAM 13836 / NRRL 3357 / JCM 12722 / SRRC 167).